Here is a 230-residue protein sequence, read N- to C-terminus: MNEMSSVRLPFRDGYYDVRPTKIVALAKNYAEHAREMGSEPPEEPIIFLKPPSALIGPGSSIILPRRSKRVDHEVELAVIMGKRAKNVPASKAFDYILGYTIILDITARDLQAEARKKGYPWTISKGFDTFAPIGPRVVDSRELDPSDLEIGLKVNGKIRQLGRTSQMIFKIPELIEYISHIMTLEPGDIIATGTPPGVGPLRHGDRIEAWIEGIGKMEFDVLAEDSILC.

Residues Glu74, Glu76, and Asp105 each coordinate a divalent metal cation.

It belongs to the FAH family.

This is an uncharacterized protein from Pyrococcus horikoshii (strain ATCC 700860 / DSM 12428 / JCM 9974 / NBRC 100139 / OT-3).